The following is a 197-amino-acid chain: Adenylate kinase (197 aa).

Glycine 16–threonine 21 provides a ligand contact to ATP. An NMP region spans residues serine 36–valine 65. AMP contacts are provided by residues threonine 37, arginine 42, glutamine 63–valine 65, glycine 90–arginine 93, and glutamine 97. An LID region spans residues aspartate 131–aspartate 147. Arginine 132 is an ATP binding site. The interval valine 137–valine 158 is disordered. Over residues arginine 141–arginine 153 the composition is skewed to basic and acidic residues. Residues arginine 144 and arginine 155 each contribute to the AMP site. Glycine 183 lines the ATP pocket.

Belongs to the adenylate kinase family. In terms of assembly, monomer.

Its subcellular location is the cytoplasm. The catalysed reaction is AMP + ATP = 2 ADP. Its pathway is purine metabolism; AMP biosynthesis via salvage pathway; AMP from ADP: step 1/1. Its function is as follows. Catalyzes the reversible transfer of the terminal phosphate group between ATP and AMP. Plays an important role in cellular energy homeostasis and in adenine nucleotide metabolism. This Deinococcus radiodurans (strain ATCC 13939 / DSM 20539 / JCM 16871 / CCUG 27074 / LMG 4051 / NBRC 15346 / NCIMB 9279 / VKM B-1422 / R1) protein is Adenylate kinase.